We begin with the raw amino-acid sequence, 322 residues long: Ribose-phosphate pyrophosphokinase (322 aa).

ATP-binding positions include 43–45 and 102–103; these read DGE and RQ. The Mg(2+) site is built by His137 and Asp177. The active site involves Lys201. D-ribose 5-phosphate is bound by residues Arg203, Asp227, and 231–235; that span reads DTAGT.

The protein belongs to the ribose-phosphate pyrophosphokinase family. Class I subfamily. As to quaternary structure, homohexamer. It depends on Mg(2+) as a cofactor.

The protein localises to the cytoplasm. The catalysed reaction is D-ribose 5-phosphate + ATP = 5-phospho-alpha-D-ribose 1-diphosphate + AMP + H(+). The protein operates within metabolic intermediate biosynthesis; 5-phospho-alpha-D-ribose 1-diphosphate biosynthesis; 5-phospho-alpha-D-ribose 1-diphosphate from D-ribose 5-phosphate (route I): step 1/1. Involved in the biosynthesis of the central metabolite phospho-alpha-D-ribosyl-1-pyrophosphate (PRPP) via the transfer of pyrophosphoryl group from ATP to 1-hydroxyl of ribose-5-phosphate (Rib-5-P). This chain is Ribose-phosphate pyrophosphokinase, found in Xylella fastidiosa (strain 9a5c).